Consider the following 297-residue polypeptide: HTH-type transcriptional regulator ArgP (297 aa).

Residues 4 to 60 (PDYRTLQALDAVIRERGFERAAQKLCITQSAVSQRIKQLENMFGQPLLVRTVPPRPT) enclose the HTH lysR-type domain. Positions 21–40 (FERAAQKLCITQSAVSQRIK) form a DNA-binding region, H-T-H motif.

Belongs to the LysR transcriptional regulatory family. Homodimer.

Its function is as follows. Controls the transcription of genes involved in arginine and lysine metabolism. The sequence is that of HTH-type transcriptional regulator ArgP from Salmonella dublin (strain CT_02021853).